Reading from the N-terminus, the 245-residue chain is MLYIFRLIVTVIYSILVCVFGSIYCLFSPRNPKHVATFGHMFGRLAPLFGLKVECRKPADAENYGNAIYIANHQNNYDMVTAANIVQPPTVTVGKKSLLWIPFFGQLYWLTGNLLIDRNNRAKAHSTIAAVVNHFKKRRISIWMFPEGTRSRGRGLLPFKTGAFHAAIAAGVPIIPVCVSNTSNKVNLNRLNNGLVIVEMLPPVDVSEYGKDQVRELAAHCRALMEQKIAELDKEVAEREATGKV.

The HXXXXD motif signature appears at 73 to 78 (HQNNYD).

Belongs to the 1-acyl-sn-glycerol-3-phosphate acyltransferase family.

Its subcellular location is the cell inner membrane. The enzyme catalyses a 1-acyl-sn-glycero-3-phosphate + an acyl-CoA = a 1,2-diacyl-sn-glycero-3-phosphate + CoA. The protein operates within phospholipid metabolism; CDP-diacylglycerol biosynthesis; CDP-diacylglycerol from sn-glycerol 3-phosphate: step 2/3. Converts lysophosphatidic acid (LPA) into phosphatidic acid by incorporating an acyl moiety at the 2 position. This enzyme can utilize either acyl-CoA or acyl-acyl-carrier-protein as the fatty acyl donor. This chain is 1-acyl-sn-glycerol-3-phosphate acyltransferase (plsC), found in Salmonella typhi.